The chain runs to 355 residues: Guanine nucleotide-binding protein subunit alpha-14 (355 aa).

The region spanning 34 to 355 (RELKLLLLGT…QLNLREFNLV (322 aa)) is the G-alpha domain. A G1 motif region spans residues 37 to 50 (KLLLLGTGESGKST). Residues 42 to 49 (GTGESGKS), 176 to 182 (LRVRVPT), 201 to 205 (DVGGQ), 270 to 273 (NKKD), and Ala-327 each bind GTP. Positions 49 and 182 each coordinate Mg(2+). The interval 174-182 (DVLRVRVPT) is G2 motif. Residues 197–206 (FRMVDVGGQR) are G3 motif. The G4 motif stretch occupies residues 266–273 (ILFLNKKD). Residues 325–330 (TCATDT) are G5 motif.

Belongs to the G-alpha family. G(q) subfamily. As to quaternary structure, g proteins are composed of 3 units; alpha, beta and gamma. The alpha chain contains the guanine nucleotide binding site.

Guanine nucleotide-binding proteins (G proteins) are involved as modulators or transducers in various transmembrane signaling systems. The sequence is that of Guanine nucleotide-binding protein subunit alpha-14 (GNA14) from Bos taurus (Bovine).